We begin with the raw amino-acid sequence, 879 residues long: Beta-alanyl-bioamine nonribosomal peptide synthetase ebony (879 aa).

The segment at 26 to 540 (FEEQQLRHAD…EHVPLLVNGK (515 aa)) is adenylation. The 78-residue stretch at 573 to 650 (EDLKLTARDL…EIIEKMAANH (78 aa)) folds into the Carrier domain. Position 611 is an O-(pantetheine 4'-phosphoryl)serine (Ser611). The tract at residues 666 to 679 (LKMEAVPLRLEHRQ) is condensation. Dopamine is bound at residue Glu696. Glu696 serves as a coordination point for histamine. Thr825 and Asn827 together coordinate beta-alanine.

It belongs to the NRP synthetase family. Pantetheine 4'-phosphate serves as cofactor. Mg(2+) is required as a cofactor. As to expression, expressed in the optic neuropils in the lamina and in distinct cells at the distal border of the medulla cortex (at protein level). Expressed in the protocerebrum and thoracic ganglia (at protein level). Expressed in antennal lobes, antennal nerves and subesophagic ganglion (at protein level). Specifically, expressed in epithelial glial cells of the medulla that surround the synaptic cleft of photoreceptor axonal endings (at protein level). Expressed in some cells in the cuticle.

The protein localises to the cytoplasm. The enzyme catalyses histamine + beta-alanine + ATP = carcinine + AMP + diphosphate + H(+). It carries out the reaction beta-alanine + ATP + H(+) = beta-alanyl-5'-AMP + diphosphate. The catalysed reaction is beta-alanyl-5'-AMP + holo-[peptidyl-carrier protein] = beta-alanyl-[peptidyl-carrier protein] + AMP + H(+). It catalyses the reaction beta-alanyl-[peptidyl-carrier protein] + histamine = carcinine + holo-[peptidyl-carrier protein] + H(+). The enzyme catalyses dopamine + beta-alanine + ATP = beta-alanyl-dopamine + AMP + diphosphate + H(+). It carries out the reaction beta-alanyl-[peptidyl-carrier protein] + dopamine = beta-alanyl-dopamine + holo-[peptidyl-carrier protein] + H(+). Its function is as follows. Nonribosomal peptide synthase which is required for the regulation of histamine and dopamine levels in various tissues through their condensation with beta-alanine. In epithelial glial cells, plays an essential role in the inactivation of histamine, the main neurotransmitter in the optical nerve system, by catalyzing the conversion of histamine into carcinine. In the cuticle, catalyzes the condensation of beta-alanine with dopamine to form beta-alanyl-dopamine (NBAD), a metabolite involved in the pigmentation and sclerotization of the insect cuticle. Also, regulates the cuticular hydrocarbon composition in females. Acts downstream of the body clock to regulate circadian behavioral rhythms. Can also condense beta-alanine with biogenic amines tyramine, octopamine, and serotonin in vitro. The sequence is that of Beta-alanyl-bioamine nonribosomal peptide synthetase ebony from Drosophila melanogaster (Fruit fly).